The chain runs to 534 residues: GTPase Obg (534 aa).

The 158-residue stretch at 2–159 folds into the Obg domain; it reads ASFVDRVVLH…SDIVLELKSI (158 aa). The tract at residues 63–82 is disordered; sequence APHRHASNGGQGMGDWRGGK. Gly residues predominate over residues 71-82; the sequence is GGQGMGDWRGGK. In terms of domain architecture, OBG-type G spans 160–343; it reads ADIALVGFPS…LSFAMAELVT (184 aa). Residues 166–173, 191–195, 212–215, 295–298, and 324–326 contribute to the GTP site; these read GFPSAGKS, FTTLI, DVPG, NKID, and SAS. Residues serine 173 and threonine 193 each coordinate Mg(2+). Residues 363-449 enclose the OCT domain; it reads PRAVNRKEFT…ENAVVFDWEP (87 aa). Residues 456–534 are disordered; the sequence is ELLSGPRGTD…AASTDDGDAL (79 aa). Basic and acidic residues-rich tracts occupy residues 464–504 and 512–526; these read TDPR…ERKA and SARRDREAHESREAA.

The protein belongs to the TRAFAC class OBG-HflX-like GTPase superfamily. OBG GTPase family. In terms of assembly, monomer. Mg(2+) serves as cofactor.

It is found in the cytoplasm. Functionally, an essential GTPase which binds GTP, GDP and possibly (p)ppGpp with moderate affinity, with high nucleotide exchange rates and a fairly low GTP hydrolysis rate. Plays a role in control of the cell cycle, stress response, ribosome biogenesis and in those bacteria that undergo differentiation, in morphogenesis control. The protein is GTPase Obg of Renibacterium salmoninarum (strain ATCC 33209 / DSM 20767 / JCM 11484 / NBRC 15589 / NCIMB 2235).